Here is a 99-residue protein sequence, read N- to C-terminus: Aspartyl/glutamyl-tRNA(Asn/Gln) amidotransferase subunit C (99 aa).

This sequence belongs to the GatC family. As to quaternary structure, heterotrimer of A, B and C subunits.

The catalysed reaction is L-glutamyl-tRNA(Gln) + L-glutamine + ATP + H2O = L-glutaminyl-tRNA(Gln) + L-glutamate + ADP + phosphate + H(+). The enzyme catalyses L-aspartyl-tRNA(Asn) + L-glutamine + ATP + H2O = L-asparaginyl-tRNA(Asn) + L-glutamate + ADP + phosphate + 2 H(+). Functionally, allows the formation of correctly charged Asn-tRNA(Asn) or Gln-tRNA(Gln) through the transamidation of misacylated Asp-tRNA(Asn) or Glu-tRNA(Gln) in organisms which lack either or both of asparaginyl-tRNA or glutaminyl-tRNA synthetases. The reaction takes place in the presence of glutamine and ATP through an activated phospho-Asp-tRNA(Asn) or phospho-Glu-tRNA(Gln). The polypeptide is Aspartyl/glutamyl-tRNA(Asn/Gln) amidotransferase subunit C (Cupriavidus metallidurans (strain ATCC 43123 / DSM 2839 / NBRC 102507 / CH34) (Ralstonia metallidurans)).